The primary structure comprises 607 residues: Chaperone protein HtpG (607 aa).

The segment at 1-323 (MKKEEKIFKA…CDSLSLNISR (323 aa)) is a; substrate-binding. Residues 324 to 534 (EILQQNAELQ…KGGLSLEMEK (211 aa)) form a b region. A c region spans residues 535-607 (TLSEMTNNND…FIKNLNSLIK (73 aa)).

It belongs to the heat shock protein 90 family. As to quaternary structure, homodimer.

The protein resides in the cytoplasm. Its function is as follows. Molecular chaperone. Has ATPase activity. This is Chaperone protein HtpG from Fusobacterium nucleatum subsp. nucleatum (strain ATCC 25586 / DSM 15643 / BCRC 10681 / CIP 101130 / JCM 8532 / KCTC 2640 / LMG 13131 / VPI 4355).